The chain runs to 159 residues: Phosphopantetheine adenylyltransferase (159 aa).

Histidine 16 lines the ATP pocket. Substrate is bound by residues lysine 40, methionine 72, and arginine 86. ATP is bound by residues 87–89 (GLR), glutamate 97, and 122–128 (YQYLSAS).

It belongs to the bacterial CoaD family. Homohexamer. The cofactor is Mg(2+).

It is found in the cytoplasm. It catalyses the reaction (R)-4'-phosphopantetheine + ATP + H(+) = 3'-dephospho-CoA + diphosphate. It functions in the pathway cofactor biosynthesis; coenzyme A biosynthesis; CoA from (R)-pantothenate: step 4/5. Reversibly transfers an adenylyl group from ATP to 4'-phosphopantetheine, yielding dephospho-CoA (dPCoA) and pyrophosphate. The chain is Phosphopantetheine adenylyltransferase from Dehalococcoides mccartyi (strain ATCC BAA-2266 / KCTC 15142 / 195) (Dehalococcoides ethenogenes (strain 195)).